A 299-amino-acid chain; its full sequence is Adenylate kinase (299 aa).

A disordered region spans residues 1–30 (MATTTTRGARDSPFPAPSEGEIKKELNMKG). 85-90 (GAGKGT) contributes to the ATP binding site. An NMP region spans residues 107–136 (ATGDMLREQVSKQTELGKMAKKIMDQGGLV). AMP is bound by residues threonine 108, arginine 113, 134–136 (GLV), 163–166 (GFPR), and glutamine 170. The interval 204-241 (GRLVHPASGRSYHKEFSPPKKPMTDDVTGEPLIQRSDD) is LID. Residues arginine 205 and 214–215 (SY) each bind ATP. Residues 212–237 (GRSYHKEFSPPKKPMTDDVTGEPLIQ) form a disordered region. Positions 215 to 227 (YHKEFSPPKKPMT) are enriched in basic and acidic residues. Residues arginine 238 and arginine 249 each coordinate AMP. ATP is bound at residue glutamine 277.

This sequence belongs to the adenylate kinase family. AK2 subfamily. As to quaternary structure, monomer.

The protein localises to the cytoplasm. The protein resides in the cytosol. Its subcellular location is the mitochondrion intermembrane space. The catalysed reaction is AMP + ATP = 2 ADP. Functionally, catalyzes the reversible transfer of the terminal phosphate group between ATP and AMP. Plays an important role in cellular energy homeostasis and in adenine nucleotide metabolism. Adenylate kinase activity is critical for regulation of the phosphate utilization and the AMP de novo biosynthesis pathways. This is Adenylate kinase from Mycosarcoma maydis (Corn smut fungus).